A 252-amino-acid chain; its full sequence is tRNA pseudouridine synthase A (252 aa).

The active-site Nucleophile is Asp54. Tyr113 is a binding site for substrate.

The protein belongs to the tRNA pseudouridine synthase TruA family. Homodimer.

It catalyses the reaction uridine(38/39/40) in tRNA = pseudouridine(38/39/40) in tRNA. Functionally, formation of pseudouridine at positions 38, 39 and 40 in the anticodon stem and loop of transfer RNAs. The sequence is that of tRNA pseudouridine synthase A from Bacteroides fragilis (strain ATCC 25285 / DSM 2151 / CCUG 4856 / JCM 11019 / LMG 10263 / NCTC 9343 / Onslow / VPI 2553 / EN-2).